The chain runs to 363 residues: G-protein coupled receptor 6 (363 aa).

Over methionine 1–proline 75 the chain is Extracellular. Asparagine 2 and asparagine 9 each carry an N-linked (GlcNAc...) asparagine glycan. The interval glycine 29–glycine 48 is disordered. Asparagine 52 carries N-linked (GlcNAc...) asparagine glycosylation. Residues tryptophan 76 to valine 95 form a helical membrane-spanning segment. Topologically, residues alanine 96–proline 107 are cytoplasmic. A helical membrane pass occupies residues methionine 108–valine 131. Over phenylalanine 132 to leucine 143 the chain is Extracellular. The helical transmembrane segment at leucine 144–valine 165 threads the bilayer. Topologically, residues aspartate 166–valine 186 are cytoplasmic. Residues histidine 187–leucine 206 form a helical membrane-spanning segment. The Extracellular portion of the chain corresponds to glycine 207–leucine 231. A helical membrane pass occupies residues serine 232–cysteine 250. Residues glutamine 251–glycine 278 are Cytoplasmic-facing. Residues valine 279–glutamine 305 traverse the membrane as a helical segment. Topologically, residues glutamate 306 to isoleucine 310 are extracellular. A helical membrane pass occupies residues tyrosine 311–phenylalanine 332. Residues arginine 333 to valine 363 are Cytoplasmic-facing. A lipid anchor (S-palmitoyl cysteine) is attached at cysteine 346. 3 positions are modified to phosphoserine: serine 357, serine 359, and serine 361.

This sequence belongs to the G-protein coupled receptor 1 family. In terms of tissue distribution, mainly expressed in the brain. Selectively expressed in striatopallidal neurons in the striatum.

It is found in the cell membrane. Functionally, orphan receptor with constitutive G(s) signaling activity that activate cyclic AMP. Promotes neurite outgrowth and blocks myelin inhibition in neurons. The protein is G-protein coupled receptor 6 (Gpr6) of Mus musculus (Mouse).